The sequence spans 237 residues: Endoglucanase-1 (237 aa).

Positions 1-16 are cleaved as a signal peptide; the sequence is MKAFHLLAALAGAAVA. At Gln17 the chain carries Pyrrolidone carboxylic acid.

This sequence belongs to the glycosyl hydrolase 12 (cellulase H) family.

Its subcellular location is the secreted. It carries out the reaction Endohydrolysis of (1-&gt;4)-beta-D-glucosidic linkages in cellulose, lichenin and cereal beta-D-glucans.. This chain is Endoglucanase-1, found in Aspergillus aculeatus.